A 120-amino-acid polypeptide reads, in one-letter code: Membrane-anchored ubiquitin-fold protein 4 (120 aa).

Positions 7–73 constitute a Ubiquitin-like domain; sequence VELKFRLYDG…LENGKTVAQC (67 aa). Cys115 carries S-palmitoyl cysteine lipidation. Cys117 is subject to Cysteine methyl ester. Cys117 is lipidated: S-farnesyl cysteine. Residues 118–120 constitute a propeptide, removed in mature form; the sequence is TIM.

Ubiquitous.

It is found in the cell membrane. Its function is as follows. May serve as docking site to facilitate the association of other proteins to the plasma membrane. This Arabidopsis thaliana (Mouse-ear cress) protein is Membrane-anchored ubiquitin-fold protein 4 (MUB4).